We begin with the raw amino-acid sequence, 388 residues long: Chorismate synthase (388 aa).

NADP(+) contacts are provided by arginine 39 and arginine 45. FMN contacts are provided by residues 130–132 (RSS), 251–252 (NA), glycine 296, 311–315 (KPIPT), and arginine 337.

Belongs to the chorismate synthase family. As to quaternary structure, homotetramer. FMNH2 is required as a cofactor.

The enzyme catalyses 5-O-(1-carboxyvinyl)-3-phosphoshikimate = chorismate + phosphate. Its pathway is metabolic intermediate biosynthesis; chorismate biosynthesis; chorismate from D-erythrose 4-phosphate and phosphoenolpyruvate: step 7/7. Catalyzes the anti-1,4-elimination of the C-3 phosphate and the C-6 proR hydrogen from 5-enolpyruvylshikimate-3-phosphate (EPSP) to yield chorismate, which is the branch point compound that serves as the starting substrate for the three terminal pathways of aromatic amino acid biosynthesis. This reaction introduces a second double bond into the aromatic ring system. This is Chorismate synthase from Lactococcus lactis subsp. lactis (strain IL1403) (Streptococcus lactis).